Reading from the N-terminus, the 446-residue chain is MTEQKRKIEKLTGVKGMNDILPQDAGLWEFFEATVKSLLRAYGYQNIRTPIVEHTQLFTRGIGEVTDIVEKEMYSFTDALNGENLTMRPENTAAVVRASIEHNMLYDGPKRLWYIGPMFRHERPQRGRYRQFHQVGVEALGFAGPDADAEIIMMCQRLWDDLGLTGIKLEINSLGLAEERAAHRVELIKYLEQFADVLDEDAKRRLYTNPLRVLDTKNPALQEIAQNAPKLIDFLGDESRAHFEGLQRLLLANNIPFKINPRLVRGLDYYNLTVFEWVTDKLGAQGTVAAGGRYDPLIEQLGGKPTAACGWAMGIERILELLKEDDLAPEQEGVDVYVVHQGETAREQAFIAAERLRDTGLDVIFHCSADGAPASFKSQMKRADASGAAFAVIFGEEEVANGTVGVKALRGAGGDGEKNVQQTVPVEGLTEFLINAMVASAEDGDD.

Belongs to the class-II aminoacyl-tRNA synthetase family. Homodimer.

The protein localises to the cytoplasm. It carries out the reaction tRNA(His) + L-histidine + ATP = L-histidyl-tRNA(His) + AMP + diphosphate + H(+). This is Histidine--tRNA ligase from Burkholderia lata (strain ATCC 17760 / DSM 23089 / LMG 22485 / NCIMB 9086 / R18194 / 383).